The sequence spans 478 residues: Siroheme synthase (478 aa).

The tract at residues 1 to 207 (MTANVLFPLF…QRHAEAEAVL (207 aa)) is precorrin-2 dehydrogenase /sirohydrochlorin ferrochelatase. Residues 25–26 (KV) and 46–47 (PS) each bind NAD(+). Ser-132 bears the Phosphoserine mark. The interval 220–478 (GSVTLVGAGA…PCPPRTHPIS (259 aa)) is uroporphyrinogen-III C-methyltransferase. Asp-252 (proton acceptor) is an active-site residue. The active-site Proton donor is the Lys-274. S-adenosyl-L-methionine contacts are provided by residues 305–307 (GGD), Val-310, 335–336 (TA), Met-387, and Gly-416.

In the N-terminal section; belongs to the precorrin-2 dehydrogenase / sirohydrochlorin ferrochelatase family. It in the C-terminal section; belongs to the precorrin methyltransferase family.

The enzyme catalyses uroporphyrinogen III + 2 S-adenosyl-L-methionine = precorrin-2 + 2 S-adenosyl-L-homocysteine + H(+). It catalyses the reaction precorrin-2 + NAD(+) = sirohydrochlorin + NADH + 2 H(+). The catalysed reaction is siroheme + 2 H(+) = sirohydrochlorin + Fe(2+). Its pathway is cofactor biosynthesis; adenosylcobalamin biosynthesis; precorrin-2 from uroporphyrinogen III: step 1/1. It functions in the pathway cofactor biosynthesis; adenosylcobalamin biosynthesis; sirohydrochlorin from precorrin-2: step 1/1. The protein operates within porphyrin-containing compound metabolism; siroheme biosynthesis; precorrin-2 from uroporphyrinogen III: step 1/1. It participates in porphyrin-containing compound metabolism; siroheme biosynthesis; siroheme from sirohydrochlorin: step 1/1. Its pathway is porphyrin-containing compound metabolism; siroheme biosynthesis; sirohydrochlorin from precorrin-2: step 1/1. Functionally, multifunctional enzyme that catalyzes the SAM-dependent methylations of uroporphyrinogen III at position C-2 and C-7 to form precorrin-2 via precorrin-1. Then it catalyzes the NAD-dependent ring dehydrogenation of precorrin-2 to yield sirohydrochlorin. Finally, it catalyzes the ferrochelation of sirohydrochlorin to yield siroheme. This is Siroheme synthase from Xylella fastidiosa (strain M23).